The primary structure comprises 213 residues: Virulence factor 1 (213 aa).

It is found in the host mitochondrion. Plays a role in antagonizing the host innate immune response. This is Virulence factor 1 from Norovirus (isolate Mouse/NoV/United States/MNV1/2002/GV) (MNV-1).